We begin with the raw amino-acid sequence, 246 residues long: 1-(5-phosphoribosyl)-5-[(5-phosphoribosylamino)methylideneamino] imidazole-4-carboxamide isomerase (246 aa).

The active-site Proton acceptor is D8. The active-site Proton donor is D131.

Belongs to the HisA/HisF family.

It is found in the cytoplasm. It carries out the reaction 1-(5-phospho-beta-D-ribosyl)-5-[(5-phospho-beta-D-ribosylamino)methylideneamino]imidazole-4-carboxamide = 5-[(5-phospho-1-deoxy-D-ribulos-1-ylimino)methylamino]-1-(5-phospho-beta-D-ribosyl)imidazole-4-carboxamide. Its pathway is amino-acid biosynthesis; L-histidine biosynthesis; L-histidine from 5-phospho-alpha-D-ribose 1-diphosphate: step 4/9. The sequence is that of 1-(5-phosphoribosyl)-5-[(5-phosphoribosylamino)methylideneamino] imidazole-4-carboxamide isomerase from Polaromonas sp. (strain JS666 / ATCC BAA-500).